The following is a 144-amino-acid chain: 3-hydroxyacyl-[acyl-carrier-protein] dehydratase FabZ (144 aa).

His51 is a catalytic residue.

This sequence belongs to the thioester dehydratase family. FabZ subfamily.

The protein resides in the cytoplasm. It carries out the reaction a (3R)-hydroxyacyl-[ACP] = a (2E)-enoyl-[ACP] + H2O. In terms of biological role, involved in unsaturated fatty acids biosynthesis. Catalyzes the dehydration of short chain beta-hydroxyacyl-ACPs and long chain saturated and unsaturated beta-hydroxyacyl-ACPs. In Lactococcus lactis subsp. cremoris (strain MG1363), this protein is 3-hydroxyacyl-[acyl-carrier-protein] dehydratase FabZ.